A 114-amino-acid polypeptide reads, in one-letter code: Cystatin Pr17a (114 aa).

The N-terminal stretch at M1–A18 is a signal peptide. Residues G31–K109 enclose the Cystatin domain. C93 and C113 are joined by a disulfide.

It belongs to the cystatin family. In terms of tissue distribution, expressed by the venom gland (posterior main gland) (at protein level).

It localises to the secreted. This is Cystatin Pr17a from Platymeris rhadamanthus (Red spot assassin bug).